Consider the following 72-residue polypeptide: Gas vesicle protein A (72 aa).

It belongs to the gas vesicle GvpA family. As to quaternary structure, the gas vesicle shell is 2 nm thick and consists of a single layer of this protein. It forms helical ribs nearly perpendicular to the long axis of the vesicle.

Its subcellular location is the gas vesicle shell. Gas vesicles are hollow, gas filled proteinaceous nanostructures found in some microorganisms. During planktonic growth they allow positioning of the organism at a favorable depth for light or nutrient acquisition. GvpA forms the protein shell. This Haloquadratum walsbyi (strain DSM 16790 / HBSQ001) protein is Gas vesicle protein A.